The chain runs to 393 residues: Digeranylgeranylglycerophospholipid reductase (393 aa).

Residues Ala-14, Asp-33, Cys-44, Ala-45, Gly-47, Arg-100, Ala-124, Asp-280, Gly-292, and Ile-293 each coordinate FAD.

It belongs to the geranylgeranyl reductase family. DGGGPL reductase subfamily. FAD serves as cofactor.

It carries out the reaction a 2,3-bis-O-phytanyl-sn-glycerol 1-phospholipid + 8 A = a 2,3-bis-O-(geranylgeranyl)-sn-glycerol 1-phospholipid + 8 AH2. The catalysed reaction is 2,3-bis-O-(phytanyl)-sn-glycerol 1-phosphate + 8 A = 2,3-bis-O-(geranylgeranyl)-sn-glycerol 1-phosphate + 8 AH2. The enzyme catalyses CDP-2,3-bis-O-(geranylgeranyl)-sn-glycerol + 8 AH2 = CDP-2,3-bis-O-(phytanyl)-sn-glycerol + 8 A. It catalyses the reaction archaetidylserine + 8 AH2 = 2,3-bis-O-phytanyl-sn-glycero-3-phospho-L-serine + 8 A. It functions in the pathway membrane lipid metabolism; glycerophospholipid metabolism. In terms of biological role, is involved in the reduction of 2,3-digeranylgeranylglycerophospholipids (unsaturated archaeols) into 2,3-diphytanylglycerophospholipids (saturated archaeols) in the biosynthesis of archaeal membrane lipids. Catalyzes the formation of archaetidic acid (2,3-di-O-phytanyl-sn-glyceryl phosphate) from 2,3-di-O-geranylgeranylglyceryl phosphate (DGGGP) via the hydrogenation of each double bond of the isoprenoid chains. Is also probably able to reduce double bonds of geranyl groups in CDP-2,3-bis-O-(geranylgeranyl)-sn-glycerol and archaetidylserine, thus acting at various stages in the biosynthesis of archaeal membrane lipids. The polypeptide is Digeranylgeranylglycerophospholipid reductase (Methanobrevibacter smithii (strain ATCC 35061 / DSM 861 / OCM 144 / PS)).